The chain runs to 266 residues: Undecaprenyl-diphosphatase (266 aa).

Transmembrane regions (helical) follow at residues 1-21 (MDFL…FIPV), 39-59 (PGSS…FWYF), 86-106 (SIFI…LFVT), 117-137 (FSIA…DIST), 153-173 (FIGI…GATI), 190-210 (SFLL…ITSI), 216-236 (FPFL…LLAI), and 246-266 (NGLK…ILNL).

It belongs to the UppP family.

It is found in the cell inner membrane. The enzyme catalyses di-trans,octa-cis-undecaprenyl diphosphate + H2O = di-trans,octa-cis-undecaprenyl phosphate + phosphate + H(+). Its function is as follows. Catalyzes the dephosphorylation of undecaprenyl diphosphate (UPP). Confers resistance to bacitracin. The chain is Undecaprenyl-diphosphatase from Prochlorococcus marinus (strain MIT 9515).